We begin with the raw amino-acid sequence, 89 residues long: Small ribosomal subunit protein bS20 (89 aa).

This sequence belongs to the bacterial ribosomal protein bS20 family.

Functionally, binds directly to 16S ribosomal RNA. The chain is Small ribosomal subunit protein bS20 from Sulfurovum sp. (strain NBC37-1).